Reading from the N-terminus, the 130-residue chain is Small ribosomal subunit protein uS11c (130 aa).

It belongs to the universal ribosomal protein uS11 family. As to quaternary structure, part of the 30S ribosomal subunit.

The protein resides in the plastid. The polypeptide is Small ribosomal subunit protein uS11c (Aneura mirabilis (Parasitic liverwort)).